Here is a 56-residue protein sequence, read N- to C-terminus: Conotoxin Cal6.41c (56 aa).

The signal sequence occupies residues 1-23 (MSGSGAMLLGLLILVAMATSLDT). 3 cysteine pairs are disulfide-bonded: C27–C41, C33–C50, and C40–C54.

Expressed by the venom duct.

The protein resides in the secreted. Functionally, probable neurotoxin. The sequence is that of Conotoxin Cal6.41c from Californiconus californicus (California cone).